The sequence spans 277 residues: Myelin proteolipid protein (277 aa).

The Cytoplasmic portion of the chain corresponds to 1 to 10 (MGLLECCARC). Residues Cys6, Cys7, and Cys10 are each lipidated (S-palmitoyl cysteine). A helical transmembrane segment spans residues 11-36 (LVGAPFASLVATGLCFFGVALFCGCG). Residues 37 to 59 (HEALTGTEKLIETYFSKNYQDYE) are Extracellular-facing. A helical membrane pass occupies residues 60 to 88 (YLINVIHAFQYVIYGTASFFFLYGALLLA). The Cytoplasmic portion of the chain corresponds to 89–151 (EGFYTTGAVR…LGKWLGHPDK (63 aa)). A lipid anchor (S-palmitoyl cysteine) is attached at Cys109. Residue Ser114 is modified to Phosphoserine. 2 positions are modified to phosphothreonine: Thr116 and Thr118. 2 S-palmitoyl cysteine lipidation sites follow: Cys139 and Cys141. The chain crosses the membrane as a helical span at residues 152 to 178 (FVGITYALTIVWLLVFACSAVPVYIYF). Over 179–238 (NTWTTCQSIAFPSKTSASIGSLCADARMYGVLPWNAFPGKVCGSNLLSICKTAEFQMTFH) the chain is Extracellular. 2 disulfides stabilise this stretch: Cys184/Cys228 and Cys201/Cys220. Residue Ser199 is the site of O-palmitoyl serine attachment. A helical membrane pass occupies residues 239 to 268 (LFIAAFVGAAATLVSLLTFMIAATYNFAVL). Residues 269 to 277 (KLMGRGTKF) are Cytoplasmic-facing.

This sequence belongs to the myelin proteolipid protein family.

The protein localises to the cell membrane. The protein resides in the myelin membrane. Functionally, this is the major myelin protein from the central nervous system. It plays an important role in the formation or maintenance of the multilamellar structure of myelin. The sequence is that of Myelin proteolipid protein (PLP1) from Canis lupus familiaris (Dog).